The chain runs to 398 residues: Cytochrome b (398 aa).

A helical membrane pass occupies residues 45–65; sequence LGSIAGIALVIQIITGVILAM. Residues His95 and His109 each coordinate heme b. 9 helical membrane passes run 96–116, 129–149, 164–184, 192–212, 245–265, 277–297, 304–324, 339–359, and 366–386; these read AVGA…GLYY, IGII…VLPW, FSAI…GFSV, FFAL…LHLV, FVGF…APNY, PLVT…YAIL, LGGV…PWLD, IAFW…SKPV, and ISRF…PLIG. Residues His196 and His210 each contribute to the heme b site.

The protein belongs to the cytochrome b family. As to quaternary structure, the main subunits of complex b-c1 are: cytochrome b, cytochrome c1 and the Rieske protein. Heme b is required as a cofactor.

The protein localises to the cell membrane. Component of the ubiquinol-cytochrome c reductase complex (complex III or cytochrome b-c1 complex), which is a respiratory chain that generates an electrochemical potential coupled to ATP synthesis. The polypeptide is Cytochrome b (petB) (Rickettsia prowazekii (strain Madrid E)).